Here is a 344-residue protein sequence, read N- to C-terminus: Follistatin (344 aa).

A signal peptide spans 1 to 29 (MVCARHQPGGLCLLLLLLCQFMEDRSAQA). Residues 30 to 103 (GNCWLRQAKN…TCENVDCGPG (74 aa)) form the TB domain. 18 disulfide bridges follow: Cys-32/Cys-55, Cys-42/Cys-88, Cys-56/Cys-91, Cys-95/Cys-106, Cys-100/Cys-116, Cys-118/Cys-150, Cys-122/Cys-143, Cys-132/Cys-164, Cys-168/Cys-179, Cys-173/Cys-189, Cys-192/Cys-225, Cys-196/Cys-218, Cys-207/Cys-239, Cys-245/Cys-256, Cys-250/Cys-267, Cys-270/Cys-302, Cys-274/Cys-295, and Cys-284/Cys-316. One can recognise a Follistatin-like 1 domain in the interval 94–117 (TCENVDCGPGKKCRMNKKNKPRCV). The Kazal-like 1 domain maps to 112–166 (NKPRCVCAPDCSNITWKGPVCGLDGKTYRNECALLKARCKEQPELEVQYQGKCKK). Asn-124 carries N-linked (GlcNAc...) asparagine glycosylation. One can recognise a Follistatin-like 2 domain in the interval 167–190 (TCRDVFCPGSSTCVVDQTNNAYCV). The Kazal-like 2 domain maps to 186-241 (NAYCVTCNRICPEPSSSEQSLCGNDGVTYSSACHLRKATCLLGRSIGLAYEGKCIK). Positions 244–268 (SCEDIQCGGGKKCLWDFKVGRGRCS) constitute a Follistatin-like 3 domain. Residues 264 to 318 (RGRCSLCDELCPDSKSDEPVCASDNATYASECAMKEAACSSGVLLEVKHSGSCNS) enclose the Kazal-like 3 domain. Asn-288 is a glycosylation site (N-linked (GlcNAc...) asparagine). The interval 315 to 344 (SCNSISEETEEEEEEEDQDYSFPISSTLEW) is disordered. Residues 321–333 (EETEEEEEEEDQD) show a composition bias toward acidic residues.

In terms of assembly, interacts with GDF11. Interacts with activin A/INHBA. Interacts with myostatin/MSTN.

The protein localises to the secreted. It is found in the nucleus. The protein resides in the nucleolus. Functionally, multifunctional regulatory protein whose primary function is to antagonize members of the transforming growth factor beta (TGF-beta) superfamily including activin, myostatin, GDF11 or bone morphogenetic proteins (BMPs). Mechanistically, binds to these ligands in the extracellular space, blocking their type II receptor-binding site to inhibit downstream signaling. Plays an essential role in muscle fiber formation and growth both by preventing the repressive effects of myostatin and through SMAD3/AKT/mTOR signaling independently of myostatin. Also promotes neural differentiation by antagonizing the action BMP4. Acts as a specific inhibitor of the biosynthesis and secretion of pituitary follicle stimulating hormone (FSH) by sequestering activin A/INHBA. On the other hand, translocates into the nucleus where it down-regulates rRNA synthesis and ribosome biogenesis to maintain cellular energy homeostasis by binding to rDNA. The chain is Follistatin from Rattus norvegicus (Rat).